Reading from the N-terminus, the 631-residue chain is Chaperone protein HtpG (631 aa).

The a; substrate-binding stretch occupies residues 1-338; the sequence is MILKEQETLG…CNDLPLNISR (338 aa). The segment at 339–554 is b; that stretch reads EMLQHNRITQ…SNNMTTHMAK (216 aa). The tract at residues 555–631 is c; it reads LIVASGQNKP…KLLNHDTIVN (77 aa).

It belongs to the heat shock protein 90 family. In terms of assembly, homodimer.

Its subcellular location is the cytoplasm. Molecular chaperone. Has ATPase activity. This is Chaperone protein HtpG from Baumannia cicadellinicola subsp. Homalodisca coagulata.